Consider the following 124-residue polypeptide: Small ribosomal subunit protein uS12 (124 aa).

Position 89 is a 3-methylthioaspartic acid (Asp89). Residues 105-124 form a disordered region; the sequence is QGVKNRKQARSKYGAKMEKK.

Belongs to the universal ribosomal protein uS12 family. In terms of assembly, part of the 30S ribosomal subunit. Contacts proteins S8 and S17. May interact with IF1 in the 30S initiation complex.

Its function is as follows. With S4 and S5 plays an important role in translational accuracy. Functionally, interacts with and stabilizes bases of the 16S rRNA that are involved in tRNA selection in the A site and with the mRNA backbone. Located at the interface of the 30S and 50S subunits, it traverses the body of the 30S subunit contacting proteins on the other side and probably holding the rRNA structure together. The combined cluster of proteins S8, S12 and S17 appears to hold together the shoulder and platform of the 30S subunit. The sequence is that of Small ribosomal subunit protein uS12 from Renibacterium salmoninarum (strain ATCC 33209 / DSM 20767 / JCM 11484 / NBRC 15589 / NCIMB 2235).